Consider the following 310-residue polypeptide: Inner membrane protein YfdC (310 aa).

A compositionally biased stretch (basic and acidic residues) spans 1–12 (MDNDKIDQHSDE). The interval 1–27 (MDNDKIDQHSDEIEVESEEKERGKKIE) is disordered. Residues 1 to 58 (MDNDKIDQHSDEIEVESEEKERGKKIEIDEDRLPSRAMAIHEHIRQDGEKELERDAMA) lie on the Cytoplasmic side of the membrane. The chain crosses the membrane as a helical span at residues 59–81 (LLWSAIAAGLSMGASLLAKGIFQ). Topologically, residues 82 to 90 (VELEGVPGS) are periplasmic. Residues 91-113 (FLLENLGYTFGFIIVIMARQQLF) form a helical membrane-spanning segment. Over 114–133 (TENTVTAVLPVMQKPTMSNV) the chain is Cytoplasmic. A helical transmembrane segment spans residues 134–156 (GLLIRLWGVVLLGNILGTGIAAW). Residues 157–186 (AFEYMPIFNEETRDAFVKIGMDVMKNTPSE) lie on the Periplasmic side of the membrane. Residues 187–206 (MFANAIISGWLIATMVWMFP) traverse the membrane as a helical segment. Topologically, residues 207 to 212 (AAGAAK) are cytoplasmic. Residues 213–232 (IVVIILMTWLIALGDTTHIV) traverse the membrane as a helical segment. Residues 233–251 (VGSVEILYLVFNGTLHWSD) lie on the Periplasmic side of the membrane. Residues 252–274 (FIWPFALPTLAGNICGGTFIFAL) form a helical membrane-spanning segment. At 275–310 (MSHAQIRNDMSNKRKAEARQKAERAENIKKNYKNPA) the chain is on the cytoplasmic side. The span at 291-303 (EARQKAERAENIK) shows a compositional bias: basic and acidic residues. A disordered region spans residues 291–310 (EARQKAERAENIKKNYKNPA).

The protein resides in the cell inner membrane. This Escherichia coli (strain K12) protein is Inner membrane protein YfdC (yfdC).